The sequence spans 411 residues: Arginine deiminase (411 aa).

Cys401 functions as the Amidino-cysteine intermediate in the catalytic mechanism.

The protein belongs to the arginine deiminase family. Post-translationally, glycosylated.

It is found in the cytoplasm. It carries out the reaction L-arginine + H2O = L-citrulline + NH4(+). Its pathway is amino-acid degradation; L-arginine degradation via ADI pathway; carbamoyl phosphate from L-arginine: step 1/2. The protein is Arginine deiminase of Streptococcus pyogenes serotype M3 (strain ATCC BAA-595 / MGAS315).